Reading from the N-terminus, the 236-residue chain is Large ribosomal subunit protein uL3 (236 aa).

Disordered stretches follow at residues Ser132–Gln153 and Lys200–Gly236. Over residues Asn133–Val145 the composition is skewed to polar residues. Position 153 is an N5-methylglutamine (Gln153). A compositionally biased stretch (polar residues) spans Val206–Thr216. Positions Asn217 to Gly228 are enriched in low complexity.

This sequence belongs to the universal ribosomal protein uL3 family. In terms of assembly, part of the 50S ribosomal subunit. Forms a cluster with proteins L14 and L19. Post-translationally, methylated by PrmB.

Functionally, one of the primary rRNA binding proteins, it binds directly near the 3'-end of the 23S rRNA, where it nucleates assembly of the 50S subunit. This is Large ribosomal subunit protein uL3 from Nitrosospira multiformis (strain ATCC 25196 / NCIMB 11849 / C 71).